Here is a 308-residue protein sequence, read N- to C-terminus: Bifunctional protein FolD (308 aa).

NADP(+)-binding positions include 171-173, S198, and I239; that span reads GRS.

The protein belongs to the tetrahydrofolate dehydrogenase/cyclohydrolase family. As to quaternary structure, homodimer.

It catalyses the reaction (6R)-5,10-methylene-5,6,7,8-tetrahydrofolate + NADP(+) = (6R)-5,10-methenyltetrahydrofolate + NADPH. It carries out the reaction (6R)-5,10-methenyltetrahydrofolate + H2O = (6R)-10-formyltetrahydrofolate + H(+). Its pathway is one-carbon metabolism; tetrahydrofolate interconversion. Its function is as follows. Catalyzes the oxidation of 5,10-methylenetetrahydrofolate to 5,10-methenyltetrahydrofolate and then the hydrolysis of 5,10-methenyltetrahydrofolate to 10-formyltetrahydrofolate. The protein is Bifunctional protein FolD of Borreliella burgdorferi (strain ZS7) (Borrelia burgdorferi).